A 421-amino-acid polypeptide reads, in one-letter code: Trimethyllysine dioxygenase, mitochondrial (421 aa).

The N-terminal 15 residues, 1–15, are a transit peptide targeting the mitochondrion; it reads MWYHRLSHLHSRLQD. N6-acetyllysine is present on residues lysine 179 and lysine 236. Fe cation is bound by residues histidine 242, aspartate 244, and histidine 389.

Belongs to the gamma-BBH/TMLD family. In terms of assembly, homodimer. Fe(2+) serves as cofactor. It depends on L-ascorbate as a cofactor. As to expression, all isoforms, but isoform 8, are widely expressed in adult and fetal tissues. Isoform 8 is restricted to heart and skeletal muscle.

Its subcellular location is the mitochondrion matrix. It catalyses the reaction N(6),N(6),N(6)-trimethyl-L-lysine + 2-oxoglutarate + O2 = (3S)-3-hydroxy-N(6),N(6),N(6)-trimethyl-L-lysine + succinate + CO2. It participates in amine and polyamine biosynthesis; carnitine biosynthesis. Converts trimethyllysine (TML) into hydroxytrimethyllysine (HTML). The polypeptide is Trimethyllysine dioxygenase, mitochondrial (TMLHE) (Homo sapiens (Human)).